A 141-amino-acid chain; its full sequence is Meiotically up-regulated gene 118 protein (141 aa).

Residues 106 to 115 (LSSQKSARQP) are compositionally biased toward polar residues. Residues 106–141 (LSSQKSARQPTKTVASSSSSSSKSTTVSKSSSKSQV) form a disordered region. Low complexity predominate over residues 116–141 (TKTVASSSSSSSKSTTVSKSSSKSQV).

The protein localises to the nucleus. In terms of biological role, has a role in meiosis. The sequence is that of Meiotically up-regulated gene 118 protein (mug118) from Schizosaccharomyces pombe (strain 972 / ATCC 24843) (Fission yeast).